Consider the following 289-residue polypeptide: Oxaloacetate decarboxylase (289 aa).

Serine 47 is a substrate binding site. Position 85 (aspartate 85) interacts with Mg(2+). The substrate site is built by arginine 156 and histidine 232.

The protein belongs to the isocitrate lyase/PEP mutase superfamily. Oxaloacetate decarboxylase family. As to quaternary structure, homotetramer; dimer of dimers. The cofactor is Mg(2+).

It catalyses the reaction oxaloacetate + H(+) = pyruvate + CO2. In terms of biological role, catalyzes the decarboxylation of oxaloacetate into pyruvate. Seems to play a role in maintaining cellular concentrations of bicarbonate and pyruvate. The chain is Oxaloacetate decarboxylase from Rhodopseudomonas palustris (strain HaA2).